Consider the following 577-residue polypeptide: uncharacterized protein (577 aa).

Polar residues-rich tracts occupy residues 1–21 (MSST…QSAS) and 68–87 (SFQN…SKTE). Disordered stretches follow at residues 1 to 24 (MSST…SAHP) and 68 to 93 (SFQN…PDDV). The next 12 helical transmembrane spans lie at 139 to 159 (CILA…AVPA), 174 to 194 (LLTM…WAPL), 204 to 224 (ILIG…GKDI), 232 to 252 (FFAG…LADM), 262 to 282 (ITLF…VGGF), 292 to 312 (WTEY…YLFC), 367 to 387 (PICF…YLLL), 402 to 422 (MGVA…GSGI), 447 to 467 (LPPM…LSWS), 473 to 493 (VNWV…LLIF), 504 to 526 (YLFR…AAGF), and 543 to 563 (GSLL…FFFF).

The protein belongs to the major facilitator superfamily. CAR1 family.

The protein resides in the endoplasmic reticulum. It is found in the membrane. This is an uncharacterized protein from Schizosaccharomyces pombe (strain 972 / ATCC 24843) (Fission yeast).